Here is a 634-residue protein sequence, read N- to C-terminus: 1-deoxy-D-xylulose-5-phosphate synthase (634 aa).

Thiamine diphosphate contacts are provided by residues His72 and Gly113 to Ser115. Asp144 provides a ligand contact to Mg(2+). Thiamine diphosphate is bound by residues Gly145–Ala146, Asn173, Tyr284, and Glu367. Residue Asn173 coordinates Mg(2+).

The protein belongs to the transketolase family. DXPS subfamily. In terms of assembly, homodimer. Mg(2+) serves as cofactor. Thiamine diphosphate is required as a cofactor.

It catalyses the reaction D-glyceraldehyde 3-phosphate + pyruvate + H(+) = 1-deoxy-D-xylulose 5-phosphate + CO2. It functions in the pathway metabolic intermediate biosynthesis; 1-deoxy-D-xylulose 5-phosphate biosynthesis; 1-deoxy-D-xylulose 5-phosphate from D-glyceraldehyde 3-phosphate and pyruvate: step 1/1. In terms of biological role, catalyzes the acyloin condensation reaction between C atoms 2 and 3 of pyruvate and glyceraldehyde 3-phosphate to yield 1-deoxy-D-xylulose-5-phosphate (DXP). The chain is 1-deoxy-D-xylulose-5-phosphate synthase from Listeria welshimeri serovar 6b (strain ATCC 35897 / DSM 20650 / CCUG 15529 / CIP 8149 / NCTC 11857 / SLCC 5334 / V8).